The sequence spans 151 residues: Probable cGMP 3',5'-cyclic phosphodiesterase subunit delta (151 aa).

It belongs to the PDE6D/unc-119 family. Interacts with Pde6.

Its subcellular location is the nucleus. The protein resides in the cytoplasm. In Anopheles gambiae (African malaria mosquito), this protein is Probable cGMP 3',5'-cyclic phosphodiesterase subunit delta.